Consider the following 35-residue polypeptide: Sperm-specific protein Phi-1 (35 aa).

2 stretches are compositionally biased toward basic residues: residues 1–17 and 25–35; these read PSPT…RSRS and AAKRAKSKTAK. Residues 1–35 form a disordered region; it reads PSPTRRSKSRSKSRSRSRSASAGKAAKRAKSKTAK.

As to expression, sperm.

It is found in the nucleus. Its subcellular location is the chromosome. Involved in nuclear basic protein transition: histones are replaced by spermatid specific proteins which are themselves replaced by protamines in late spermatids. The chain is Sperm-specific protein Phi-1 from Mytilus californianus (California mussel).